The primary structure comprises 416 residues: Formyl-CoA:oxalate CoA-transferase (416 aa).

Residues 17 to 18, Arg-38, 72 to 75, 96 to 98, His-104, and 137 to 140 contribute to the CoA site; these read QS, LNTK, NFH, and KAYE. Asp-169 serves as the catalytic Nucleophile. Residue 248-250 coordinates substrate; that stretch reads GGQ. 273-275 lines the CoA pocket; the sequence is QEQ.

This sequence belongs to the CoA-transferase III family. Frc subfamily. In terms of assembly, homodimer.

It carries out the reaction formyl-CoA + oxalate = oxalyl-CoA + formate. The protein operates within metabolic intermediate degradation; oxalate degradation; CO(2) and formate from oxalate: step 1/2. Its function is as follows. Involved in the catabolism of oxalate and in the adapatation to low pH via the induction of the oxalate-dependent acid tolerance response (ATR). Catalyzes the transfer of the CoA moiety from formyl-CoA to oxalate. This is Formyl-CoA:oxalate CoA-transferase from Shigella sonnei (strain Ss046).